Consider the following 607-residue polypeptide: Transporter aclS (607 aa).

The next 12 helical transmembrane spans lie at 67 to 87 (LGGS…AVVL), 91 to 111 (IAAI…IGFP), 152 to 172 (LTVV…TAIL), 192 to 212 (VTTQ…PVLY), 221 to 241 (LMIG…IWSL), 262 to 282 (SLGF…SIAL), 317 to 337 (VFGQ…FGCL), 364 to 384 (AAAV…NVVD), 423 to 443 (GCYV…LASA), 445 to 465 (TFVS…GIHI), 500 to 520 (GVLP…HSIN), and 531 to 551 (HLYA…HTLV). The segment at 583–607 (NKDSTEEDSDRSLRRESREVVETKV) is disordered. Basic and acidic residues predominate over residues 592 to 607 (DRSLRRESREVVETKV).

Belongs to the purine-cytosine permease (2.A.39) family.

Its subcellular location is the membrane. In terms of biological role, transporter; part of the gene cluster that mediates the biosynthesis of aspirochlorine (or antibiotic A30641), an unusual halogenated spiro compound with distinctive antifungal properties due to selective inhibition of protein biosynthesis, and which is also active against bacteria, viruses, and murine tumor cells. This chain is Transporter aclS, found in Aspergillus oryzae (strain ATCC 42149 / RIB 40) (Yellow koji mold).